The sequence spans 289 residues: Rhodopsin (289 aa).

At 1-7 (YLVNPAG) the chain is on the extracellular side. The chain crosses the membrane as a helical span at residues 8–32 (YAALGAYMFLLILIGFPVNFLTLYV). The Cytoplasmic segment spans residues 33–44 (TLEHKKLRTPLN). The helical transmembrane segment at 45–67 (YILLNLAVADLFMVLGGFTTTMY) threads the bilayer. Topologically, residues 68 to 81 (TSMHGYFVLGRLGC) are extracellular. Cysteines 81 and 158 form a disulfide. The helical transmembrane segment at 82–104 (NLEGFFATLGGEIALWSLVVLAI) threads the bilayer. Residues 105-107 (ERW) carry the 'Ionic lock' involved in activated form stabilization motif. The Cytoplasmic segment spans residues 105–123 (ERWIVGLKPIRNFRFTEDH). Residues 124 to 144 (AIMGLAFSWVMALSCAVPPLA) form a helical membrane-spanning segment. The Extracellular segment spans residues 145–173 (GWLRYIPEGIQGSCGVDYYTRAEGFNNES). Asn-171 carries N-linked (GlcNAc...) asparagine glycosylation. A helical transmembrane segment spans residues 174–195 (FVIYMFTVHFLIPLSVIFFCYG). Residues 196–223 (RLLCAVKEAAAAQQESETTQRAEKEVSR) lie on the Cytoplasmic side of the membrane. Residues 224–245 (MVVIMVIGFLVCWLPYASVAWW) form a helical membrane-spanning segment. Residues 246-257 (IFCNQGSDFGPI) lie on the Extracellular side of the membrane. A helical membrane pass occupies residues 258–279 (FMTLPSFFAKRPAIYNPMIYIC). An N6-(retinylidene)lysine modification is found at Lys-267. Topologically, residues 280 to 289 (MNKQFRHCMI) are cytoplasmic.

This sequence belongs to the G-protein coupled receptor 1 family. Opsin subfamily. Post-translationally, phosphorylated on some or all of the serine and threonine residues present in the C-terminal region. In terms of processing, contains one covalently linked retinal chromophore.

It is found in the membrane. The protein localises to the cell projection. It localises to the cilium. The protein resides in the photoreceptor outer segment. Photoreceptor required for image-forming vision at low light intensity. While most salt water fish species use retinal as chromophore, most freshwater fish use 3-dehydroretinal, or a mixture of retinal and 3-dehydroretinal. Light-induced isomerization of 11-cis to all-trans retinal triggers a conformational change that activates signaling via G-proteins. Subsequent receptor phosphorylation mediates displacement of the bound G-protein alpha subunit by arrestin and terminates signaling. The chain is Rhodopsin (rho) from Limnocottus pallidus (Ray-finned fish).